The primary structure comprises 151 residues: UPF0208 membrane protein Spro_3315 (151 aa).

Transmembrane regions (helical) follow at residues 46–64 (FAVRFMPPLAVFTLTWQIA) and 70–90 (GPAIATALFACSMPMQGLWWL).

It belongs to the UPF0208 family.

It localises to the cell inner membrane. This is UPF0208 membrane protein Spro_3315 from Serratia proteamaculans (strain 568).